The chain runs to 371 residues: Loganic acid O-methyltransferase (371 aa).

S-adenosyl-L-homocysteine is bound at residue Tyr31. Loganate-binding residues include Tyr37 and Gln38. S-adenosyl-L-homocysteine is bound by residues Cys78, Asn83, Asp114, His115, Ser141, and Phe142. Loganate contacts are provided by His162 and Trp163. Asn180 provides a ligand contact to Mg(2+). Loganate contacts are provided by Ala241 and His245. Residues Asp267, Phe269, and Asn270 each contribute to the Mg(2+) site. Residues Gln273 and Gln316 each contribute to the loganate site.

The protein belongs to the methyltransferase superfamily. Type-7 methyltransferase family. As to quaternary structure, homodimer. Mg(2+) is required as a cofactor. As to expression, expressed in leaves (especially in leaf epidermis), flowers, siliques and stems, and, at low levels, in hairy roots.

The enzyme catalyses loganate + S-adenosyl-L-methionine = loganin + S-adenosyl-L-homocysteine. It participates in alkaloid biosynthesis. Its activity is regulated as follows. Strongly repressed by loganin and slightly by S-adenosyl-L-homocysteine. Component of the seco-iridoid and derivatives monoterpenoid indole alkaloids (MIAs, e.g. vinblastine and ajmalicine) biosynthesis pathway. Catalyzes the methylation of loganic acid (6S,7R) to produce loganin. Weak activity with secologanic acid as substrate. Inactive on deoxyloganic, dehydrologanic, epiloganic and loganetic acid. In Catharanthus roseus (Madagascar periwinkle), this protein is Loganic acid O-methyltransferase.